The following is a 453-amino-acid chain: Tol-Pal system protein TolB (453 aa).

The N-terminal stretch at 1 to 31 is a signal peptide; it reads MINNLSVSMTKVLKIILTIIIILFNTLSILA.

Belongs to the TolB family. In terms of assembly, the Tol-Pal system is composed of five core proteins: the inner membrane proteins TolA, TolQ and TolR, the periplasmic protein TolB and the outer membrane protein Pal. They form a network linking the inner and outer membranes and the peptidoglycan layer.

It localises to the periplasm. In terms of biological role, part of the Tol-Pal system, which plays a role in outer membrane invagination during cell division and is important for maintaining outer membrane integrity. This Orientia tsutsugamushi (strain Boryong) (Rickettsia tsutsugamushi) protein is Tol-Pal system protein TolB.